The primary structure comprises 358 residues: Isopentenyl-diphosphate delta-isomerase (358 aa).

12 to 13 (RK) provides a ligand contact to substrate. Residues 69 to 71 (AMT), serine 99, and asparagine 128 contribute to the FMN site. Glutamine 158 contacts substrate. Glutamate 159 contributes to the Mg(2+) binding site. FMN-binding positions include lysine 190, threonine 220, 267 to 269 (GIR), and 288 to 289 (AG).

This sequence belongs to the IPP isomerase type 2 family. In terms of assembly, homooctamer. Dimer of tetramers. The cofactor is FMN. NADPH serves as cofactor. It depends on Mg(2+) as a cofactor.

It is found in the cytoplasm. It catalyses the reaction isopentenyl diphosphate = dimethylallyl diphosphate. In terms of biological role, involved in the biosynthesis of isoprenoids. Catalyzes the 1,3-allylic rearrangement of the homoallylic substrate isopentenyl (IPP) to its allylic isomer, dimethylallyl diphosphate (DMAPP). In Listeria monocytogenes serotype 4b (strain CLIP80459), this protein is Isopentenyl-diphosphate delta-isomerase.